The following is a 534-amino-acid chain: MTKYIFVTGGVVSSIGKGIVAASLGRLLKNRGLKVTIQKFDPYINIDPGTMSPYQHGEVYVTDDGAETDLDLGHYERFIDINLNKYSNVTTGKIYSEVLRKERKGEYLGATVQVIPHITDALKEKIKRAASTTDSDVIITEVGGTVGDIESLPFLEALRQMKADVGSENVMYIHTTLLPYLKAAGEMKTKPTQHSVKELRGLGIQPNMLVIRTEEPVEQGIKNKLAQFCDVNSEAVIESRDVEHLYQIPLNLQAQSMDQIVCDHLKLNAPQADMTEWSAMVDKVMNLRKTTKIALVGKYVELPDAYLSVVEALKHSGYANDTAIDLKWVNANDVTVENAADLLGDADGIIVPGGFGQRGTEGKIQAIRYARENDVPMLGICLGMQLTCVEFARHVLNMEGANSFELEPSTKYPIIDIMRDQIDIEDMGGTLRLGLYPCKLKPGSKAAMAYNNQEVVQRRHRHRYEFNNKFRSEFEAAGFVFSGVSPDNRLVEIVELKEKKFFVAAQYHPELQSRPNRPEELYTAFVTAAIKNSN.

Positions 1–267 are amidoligase domain; the sequence is MTKYIFVTGG…DQIVCDHLKL (267 aa). Position 13 (Ser13) interacts with CTP. Ser13 contributes to the UTP binding site. 14 to 19 contributes to the ATP binding site; that stretch reads SIGKGI. Tyr54 serves as a coordination point for L-glutamine. ATP is bound at residue Asp71. Mg(2+)-binding residues include Asp71 and Glu141. CTP is bound by residues 148–150, 188–193, and Lys224; these read DIE and KTKPTQ. UTP-binding positions include 188–193 and Lys224; that span reads KTKPTQ. Residue 240 to 242 coordinates ATP; that stretch reads RDV. Residues 292 to 534 enclose the Glutamine amidotransferase type-1 domain; it reads KIALVGKYVE…FVTAAIKNSN (243 aa). Gly354 provides a ligand contact to L-glutamine. Cys381 (nucleophile; for glutamine hydrolysis) is an active-site residue. L-glutamine contacts are provided by residues 382–385, Glu405, and Arg463; that span reads LGMQ. Residues His508 and Glu510 contribute to the active site.

This sequence belongs to the CTP synthase family. Homotetramer.

The enzyme catalyses UTP + L-glutamine + ATP + H2O = CTP + L-glutamate + ADP + phosphate + 2 H(+). It carries out the reaction L-glutamine + H2O = L-glutamate + NH4(+). The catalysed reaction is UTP + NH4(+) + ATP = CTP + ADP + phosphate + 2 H(+). It functions in the pathway pyrimidine metabolism; CTP biosynthesis via de novo pathway; CTP from UDP: step 2/2. Allosterically activated by GTP, when glutamine is the substrate; GTP has no effect on the reaction when ammonia is the substrate. The allosteric effector GTP functions by stabilizing the protein conformation that binds the tetrahedral intermediate(s) formed during glutamine hydrolysis. Inhibited by the product CTP, via allosteric rather than competitive inhibition. Catalyzes the ATP-dependent amination of UTP to CTP with either L-glutamine or ammonia as the source of nitrogen. Regulates intracellular CTP levels through interactions with the four ribonucleotide triphosphates. The sequence is that of CTP synthase from Streptococcus pyogenes serotype M18 (strain MGAS8232).